We begin with the raw amino-acid sequence, 188 residues long: Nicotinamide-nucleotide adenylyltransferase (188 aa).

Residues 166–188 are disordered; sequence SDSLERYAATGESLPESLDDLDD.

Belongs to the archaeal NMN adenylyltransferase family.

It localises to the cytoplasm. It catalyses the reaction beta-nicotinamide D-ribonucleotide + ATP + H(+) = diphosphate + NAD(+). Its pathway is cofactor biosynthesis; NAD(+) biosynthesis; NAD(+) from nicotinamide D-ribonucleotide: step 1/1. This chain is Nicotinamide-nucleotide adenylyltransferase, found in Haloarcula marismortui (strain ATCC 43049 / DSM 3752 / JCM 8966 / VKM B-1809) (Halobacterium marismortui).